Reading from the N-terminus, the 859-residue chain is Leucine--tRNA ligase (859 aa).

Positions 42–52 (PYPSGRLHMGH) match the 'HIGH' region motif. The 'KMSKS' region signature appears at 618–622 (KMSKS). Residue K621 coordinates ATP.

The protein belongs to the class-I aminoacyl-tRNA synthetase family.

It is found in the cytoplasm. The catalysed reaction is tRNA(Leu) + L-leucine + ATP = L-leucyl-tRNA(Leu) + AMP + diphosphate. The protein is Leucine--tRNA ligase of Shewanella baltica (strain OS155 / ATCC BAA-1091).